A 415-amino-acid polypeptide reads, in one-letter code: Serine hydroxymethyltransferase (415 aa).

(6S)-5,6,7,8-tetrahydrofolate contacts are provided by residues L117 and 121 to 123; that span reads GHL. An N6-(pyridoxal phosphate)lysine modification is found at K226. E241 contacts (6S)-5,6,7,8-tetrahydrofolate.

This sequence belongs to the SHMT family. As to quaternary structure, homodimer. The cofactor is pyridoxal 5'-phosphate.

It is found in the cytoplasm. The catalysed reaction is (6R)-5,10-methylene-5,6,7,8-tetrahydrofolate + glycine + H2O = (6S)-5,6,7,8-tetrahydrofolate + L-serine. It functions in the pathway one-carbon metabolism; tetrahydrofolate interconversion. The protein operates within amino-acid biosynthesis; glycine biosynthesis; glycine from L-serine: step 1/1. Catalyzes the reversible interconversion of serine and glycine with tetrahydrofolate (THF) serving as the one-carbon carrier. This reaction serves as the major source of one-carbon groups required for the biosynthesis of purines, thymidylate, methionine, and other important biomolecules. Also exhibits THF-independent aldolase activity toward beta-hydroxyamino acids, producing glycine and aldehydes, via a retro-aldol mechanism. The chain is Serine hydroxymethyltransferase from Bacillus velezensis (strain DSM 23117 / BGSC 10A6 / LMG 26770 / FZB42) (Bacillus amyloliquefaciens subsp. plantarum).